The sequence spans 111 residues: Large ribosomal subunit protein uL22 (111 aa).

Belongs to the universal ribosomal protein uL22 family. As to quaternary structure, part of the 50S ribosomal subunit.

Its function is as follows. This protein binds specifically to 23S rRNA; its binding is stimulated by other ribosomal proteins, e.g. L4, L17, and L20. It is important during the early stages of 50S assembly. It makes multiple contacts with different domains of the 23S rRNA in the assembled 50S subunit and ribosome. Functionally, the globular domain of the protein is located near the polypeptide exit tunnel on the outside of the subunit, while an extended beta-hairpin is found that lines the wall of the exit tunnel in the center of the 70S ribosome. The sequence is that of Large ribosomal subunit protein uL22 from Acidithiobacillus ferrooxidans (strain ATCC 23270 / DSM 14882 / CIP 104768 / NCIMB 8455) (Ferrobacillus ferrooxidans (strain ATCC 23270)).